The sequence spans 191 residues: Fe/S biogenesis protein NfuA (191 aa).

[4Fe-4S] cluster contacts are provided by Cys149 and Cys152.

This sequence belongs to the NfuA family. As to quaternary structure, homodimer. The cofactor is [4Fe-4S] cluster.

Involved in iron-sulfur cluster biogenesis. Binds a 4Fe-4S cluster, can transfer this cluster to apoproteins, and thereby intervenes in the maturation of Fe/S proteins. Could also act as a scaffold/chaperone for damaged Fe/S proteins. The protein is Fe/S biogenesis protein NfuA of Pectobacterium atrosepticum (strain SCRI 1043 / ATCC BAA-672) (Erwinia carotovora subsp. atroseptica).